Reading from the N-terminus, the 519-residue chain is Bifunctional NAD(P)H-hydrate repair enzyme Nnr (519 aa).

The tract at residues 1–233 (MMRCGEGYPG…DIGIPPAAEI (233 aa)) is NAD(P)H-hydrate epimerase. The YjeF N-terminal domain occupies 25–233 (MAAADINAEY…DIGIPPAAEI (209 aa)). Positions 71–75 (GNGGD) are NADPHX 1; for epimerase activity. K(+)-binding residues include Asn72 and Asp144. The tract at residues 148–154 (GTGVRGS) is NADPHX 1; for epimerase activity. Asp177 provides a ligand contact to (6S)-NADPHX. K(+) is bound at residue Ser180. In terms of domain architecture, YjeF C-terminal spans 235 to 515 (MGPGDLLRIP…DMIPSVMDPG (281 aa)). The interval 235–519 (MGPGDLLRIP…SVMDPGFYGF (285 aa)) is ADP-dependent (S)-NAD(P)H-hydrate dehydratase. Gly338 is a (6S)-NADPHX binding site. An NADPHX 2; for dehydratase activity region spans residues 389-395 (HMAEFSS). ADP-binding positions include 428–432 (KGRID) and 447–456 (CPGMTVGGTG). Residue Asp457 participates in (6S)-NADPHX binding.

The protein in the N-terminal section; belongs to the NnrE/AIBP family. This sequence in the C-terminal section; belongs to the NnrD/CARKD family. It depends on K(+) as a cofactor.

It catalyses the reaction (6S)-NADHX + ADP = AMP + phosphate + NADH + H(+). The enzyme catalyses (6S)-NADPHX + ADP = AMP + phosphate + NADPH + H(+). The catalysed reaction is (6R)-NADHX = (6S)-NADHX. It carries out the reaction (6R)-NADPHX = (6S)-NADPHX. Functionally, bifunctional enzyme that catalyzes the epimerization of the S- and R-forms of NAD(P)HX and the dehydration of the S-form of NAD(P)HX at the expense of ADP, which is converted to AMP. This allows the repair of both epimers of NAD(P)HX, a damaged form of NAD(P)H that is a result of enzymatic or heat-dependent hydration. This chain is Bifunctional NAD(P)H-hydrate repair enzyme Nnr (nnr), found in Methanothermobacter thermautotrophicus (strain ATCC 29096 / DSM 1053 / JCM 10044 / NBRC 100330 / Delta H) (Methanobacterium thermoautotrophicum).